Here is a 311-residue protein sequence, read N- to C-terminus: Syntaxin-111 (311 aa).

At methionine 1–lysine 284 the chain is on the cytoplasmic side. The t-SNARE coiled-coil homology domain maps to valine 213 to alanine 275. A helical; Anchor for type IV membrane protein transmembrane segment spans residues tryptophan 285–alanine 305. At threonine 306–serine 311 the chain is on the vesicular side.

Belongs to the syntaxin family. Expressed in roots and panicles.

The protein resides in the cell membrane. It is found in the cytoplasm. Its function is as follows. Vesicle trafficking protein that functions in the secretory pathway. The chain is Syntaxin-111 from Oryza sativa subsp. japonica (Rice).